The chain runs to 1135 residues: Putative beta-hexosaminidase (1135 aa).

The signal sequence occupies residues 1-23 (MKWVKSGVGILGILLTICHAVTS). Disordered stretches follow at residues 970-1082 (AHPP…LPGQ) and 1107-1135 (QMRG…QQAG). Pro residues predominate over residues 986–1003 (NMPPPFPPRPPFGPPMLP). 2 stretches are compositionally biased toward low complexity: residues 1004 to 1026 (PGQM…TALG) and 1043 to 1073 (TGQA…LPGQ).

It belongs to the glycosyl hydrolase 20 family. As to expression, prismatic layer of shell (at protein level). Expressed primarily in the mantle with highest level in the mantle edge and lower level in the mantle pallium.

The protein resides in the secreted. The catalysed reaction is Hydrolysis of terminal non-reducing N-acetyl-D-hexosamine residues in N-acetyl-beta-D-hexosaminides.. Its pathway is glycan degradation; chitin degradation. The chain is Putative beta-hexosaminidase from Margaritifera margaritifera (Freshwater pearl mussel).